We begin with the raw amino-acid sequence, 149 residues long: MHCPFCFAVDTKVIDSRLVGEGSSVRRRRQCLVCNERFTTFEVAELVMPRVVKSNDVREPFNEEKLRSGMLRALEKRPVSSDYVEMAINHIKSQLRATGEREVPSKMIGNLVMEQLKKLDKVAYIRFASVYRSFEDIKEFGEEIARLED.

A zinc finger spans residues 3–34 (CPFCFAVDTKVIDSRLVGEGSSVRRRRQCLVC). Residues 49–139 (PRVVKSNDVR…VYRSFEDIKE (91 aa)) enclose the ATP-cone domain.

Belongs to the NrdR family. Zn(2+) serves as cofactor.

In terms of biological role, negatively regulates transcription of bacterial ribonucleotide reductase nrd genes and operons by binding to NrdR-boxes. This is Transcriptional repressor NrdR from Shigella flexneri.